The sequence spans 220 residues: MKINKYIDHTLLKADSVQSQIDQLLSEAKTHEFASVCVNPGWVSYCAEALKGSDVKVCTVVGFPLGATTPETKAFETKNAIENGADEIDMVLNIGKLKQGDYQAVEDDVRAVVEASGDKLVKVIIEACLLTDDEKIKACQLSVAAGADFVKTSTGFSTGGATISDVKLMRQTVGPEIGVKAAGGARSLEDALAFIEAGATRIGTSAGVKIINGEAVKGGY.

The Proton donor/acceptor role is filled by D89. The active-site Schiff-base intermediate with acetaldehyde is K151. K180 (proton donor/acceptor) is an active-site residue.

It belongs to the DeoC/FbaB aldolase family. DeoC type 1 subfamily.

It localises to the cytoplasm. It catalyses the reaction 2-deoxy-D-ribose 5-phosphate = D-glyceraldehyde 3-phosphate + acetaldehyde. It participates in carbohydrate degradation; 2-deoxy-D-ribose 1-phosphate degradation; D-glyceraldehyde 3-phosphate and acetaldehyde from 2-deoxy-alpha-D-ribose 1-phosphate: step 2/2. In terms of biological role, catalyzes a reversible aldol reaction between acetaldehyde and D-glyceraldehyde 3-phosphate to generate 2-deoxy-D-ribose 5-phosphate. This Streptococcus uberis (strain ATCC BAA-854 / 0140J) protein is Deoxyribose-phosphate aldolase.